We begin with the raw amino-acid sequence, 347 residues long: Ryncolin-2 (347 aa).

Positions 1–19 (MKPWAAFHLIFLVASSLEG) are cleaved as a signal peptide. The disordered stretch occupies residues 49-115 (LQSQPGIPGI…DKGDKGDKGD (67 aa)). Positions 57 to 114 (GIPGVPGINGSEGLKGDPGPQGLPGETGFDGIPGVAGPKGDKGDQGDKGDKGDKGDKG) constitute a Collagen-like domain. Basic and acidic residues predominate over residues 95-115 (KGDKGDQGDKGDKGDKGDKGD). The region spanning 121 to 341 (DCPPTDVEVR…YADMKIRPQQ (221 aa)) is the Fibrinogen C-terminal domain. Intrachain disulfides connect C132-C160 and C284-C297.

Belongs to the ficolin lectin family. Veficolin subfamily. Post-translationally, hydroxylated, possibly at Pro-74 and Pro-94. As to expression, expressed by the venom duct.

Its subcellular location is the secreted. Initiates complement activation and/or interferes in platelet aggregation and/or blood coagulation. The polypeptide is Ryncolin-2 (Cerberus rynchops (Dog-faced water snake)).